A 152-amino-acid polypeptide reads, in one-letter code: MANSERTFIAIKPDGVQRGLVGEIIKRFEQKGFRLVGLKFIQASEDLLKEHYIDLKDRPFFSGLVKYMHSGPVVAMVWEGLNVVKTGRVMLGETNPADSKPGTIRGDFCIQVGRNIIHGSDSVESAEKEISLWFQPEELVDYKSCAQNWIYE.

4 residues coordinate ATP: Lys12, Phe60, Arg88, and Thr94. A Glycyl lysine isopeptide (Lys-Gly) (interchain with G-Cter in ubiquitin) cross-link involves residue Lys100. 2 residues coordinate ATP: Arg105 and Asn115. The Pros-phosphohistidine intermediate role is filled by His118. Phosphoserine occurs at positions 120, 122, and 125.

It belongs to the NDK family. As to quaternary structure, hexamer of two different chains: An and B (A6, A5B, A4B2, A3B3, A2B4, AB5, B6). Interacts with PRUNE1. Component of the SET complex, composed of at least ANP32A, APEX1, HMGB2, NME1, SET and TREX1. Within this complex, interacts directly with SET. Also interacts with TREX1, but only following translocation to the nucleus. Mg(2+) is required as a cofactor.

It is found in the cytoplasm. Its subcellular location is the nucleus. It carries out the reaction a 2'-deoxyribonucleoside 5'-diphosphate + ATP = a 2'-deoxyribonucleoside 5'-triphosphate + ADP. It catalyses the reaction a ribonucleoside 5'-diphosphate + ATP = a ribonucleoside 5'-triphosphate + ADP. With respect to regulation, autophosphorylation at His-118 increases serine/threonine protein kinase activity of the enzyme. Interaction with the SET complex inhibits exonuclease activity. In terms of biological role, major role in the synthesis of nucleoside triphosphates other than ATP. The ATP gamma phosphate is transferred to the NDP beta phosphate via a ping-pong mechanism, using a phosphorylated active-site intermediate. Possesses nucleoside-diphosphate kinase, serine/threonine-specific protein kinase, geranyl and farnesyl pyrophosphate kinase, histidine protein kinase and 3'-5' exonuclease activities. Involved in cell proliferation, differentiation and development, signal transduction, G protein-coupled receptor endocytosis, and gene expression. Required for neural development including neural patterning and cell fate determination. During GZMA-mediated cell death, works in concert with TREX1. NME1 nicks one strand of DNA and TREX1 removes bases from the free 3' end to enhance DNA damage and prevent DNA end reannealing and rapid repair. The chain is Nucleoside diphosphate kinase A (Nme1) from Rattus norvegicus (Rat).